A 154-amino-acid polypeptide reads, in one-letter code: Melatonin receptor type 1A (154 aa).

Topologically, residues 1–19 (YCYICHSLKYDRWYSNRNS) are cytoplasmic. Residues 20–40 (LCCVFLICVLTLVAIVPNLCM) traverse the membrane as a helical segment. The Extracellular segment spans residues 41–62 (GTLQYDPRIYSCTFAQSVSSAY). The chain crosses the membrane as a helical span at residues 63–83 (TIAVVVFHFLVPMVIVIFRYL). The Cytoplasmic portion of the chain corresponds to 84–115 (RIWVLVLQIRWRAKPENNPRLKPQDFRNFVTM). A helical transmembrane segment spans residues 116 to 136 (FVVFVLFAICWAPLNFIGLAV). Residues 137–149 (ASDPASMAPRIPE) are Extracellular-facing.

Belongs to the G-protein coupled receptor 1 family.

It localises to the cell membrane. Its function is as follows. High affinity receptor for melatonin. Likely to mediate the reproductive and circadian actions of melatonin. The activity of this receptor is mediated by pertussis toxin sensitive G proteins that inhibit adenylate cyclase activity. This chain is Melatonin receptor type 1A (MTNR1A), found in Sus scrofa (Pig).